The sequence spans 518 residues: Membrane-bound lytic murein transglycosylase F (518 aa).

The signal sequence occupies residues 1 to 21 (MKKLKINYLFIGILALLLAVA). Positions 22–269 (LWPSIPWFGK…RIEEKYLGHG (248 aa)) are non-LT domain. The LT domain stretch occupies residues 270 to 518 (DDFDYVDTRT…SRKGSEEKQN (249 aa)). Glu314 is a catalytic residue.

This sequence in the N-terminal section; belongs to the bacterial solute-binding protein 3 family. The protein in the C-terminal section; belongs to the transglycosylase Slt family.

Its subcellular location is the cell outer membrane. It catalyses the reaction Exolytic cleavage of the (1-&gt;4)-beta-glycosidic linkage between N-acetylmuramic acid (MurNAc) and N-acetylglucosamine (GlcNAc) residues in peptidoglycan, from either the reducing or the non-reducing ends of the peptidoglycan chains, with concomitant formation of a 1,6-anhydrobond in the MurNAc residue.. Functionally, murein-degrading enzyme that degrades murein glycan strands and insoluble, high-molecular weight murein sacculi, with the concomitant formation of a 1,6-anhydromuramoyl product. Lytic transglycosylases (LTs) play an integral role in the metabolism of the peptidoglycan (PG) sacculus. Their lytic action creates space within the PG sacculus to allow for its expansion as well as for the insertion of various structures such as secretion systems and flagella. The sequence is that of Membrane-bound lytic murein transglycosylase F from Shigella boydii serotype 18 (strain CDC 3083-94 / BS512).